A 955-amino-acid chain; its full sequence is Valine--tRNA ligase (955 aa).

The 'HIGH' region signature appears at 41-51 (PNITGSLHMGH). Residues 554-558 (KMSKS) carry the 'KMSKS' region motif. Residue Lys557 participates in ATP binding. The stretch at 926–946 (QEKNKLLKLNEINLKLSEQIK) forms a coiled coil.

Belongs to the class-I aminoacyl-tRNA synthetase family. ValS type 1 subfamily. Monomer.

It localises to the cytoplasm. The enzyme catalyses tRNA(Val) + L-valine + ATP = L-valyl-tRNA(Val) + AMP + diphosphate. In terms of biological role, catalyzes the attachment of valine to tRNA(Val). As ValRS can inadvertently accommodate and process structurally similar amino acids such as threonine, to avoid such errors, it has a 'posttransfer' editing activity that hydrolyzes mischarged Thr-tRNA(Val) in a tRNA-dependent manner. The chain is Valine--tRNA ligase from Buchnera aphidicola subsp. Acyrthosiphon pisum (strain APS) (Acyrthosiphon pisum symbiotic bacterium).